We begin with the raw amino-acid sequence, 134 residues long: ATP synthase epsilon chain (134 aa).

The protein belongs to the ATPase epsilon chain family. In terms of assembly, F-type ATPases have 2 components, CF(1) - the catalytic core - and CF(0) - the membrane proton channel. CF(1) has five subunits: alpha(3), beta(3), gamma(1), delta(1), epsilon(1). CF(0) has three main subunits: a, b and c.

It is found in the cell inner membrane. Functionally, produces ATP from ADP in the presence of a proton gradient across the membrane. The polypeptide is ATP synthase epsilon chain (Syntrophobacter fumaroxidans (strain DSM 10017 / MPOB)).